We begin with the raw amino-acid sequence, 364 residues long: tRNA 2-selenouridine synthase (364 aa).

In terms of domain architecture, Rhodanese spans 14–137; sequence LIADTPIIDV…LRQTAIQATI (124 aa). Cysteine 97 acts as the S-selanylcysteine intermediate in catalysis.

Belongs to the SelU family. As to quaternary structure, monomer.

It catalyses the reaction 5-methylaminomethyl-2-thiouridine(34) in tRNA + selenophosphate + (2E)-geranyl diphosphate + H2O + H(+) = 5-methylaminomethyl-2-selenouridine(34) in tRNA + (2E)-thiogeraniol + phosphate + diphosphate. It carries out the reaction 5-methylaminomethyl-2-thiouridine(34) in tRNA + (2E)-geranyl diphosphate = 5-methylaminomethyl-S-(2E)-geranyl-thiouridine(34) in tRNA + diphosphate. The catalysed reaction is 5-methylaminomethyl-S-(2E)-geranyl-thiouridine(34) in tRNA + selenophosphate + H(+) = 5-methylaminomethyl-2-(Se-phospho)selenouridine(34) in tRNA + (2E)-thiogeraniol. The enzyme catalyses 5-methylaminomethyl-2-(Se-phospho)selenouridine(34) in tRNA + H2O = 5-methylaminomethyl-2-selenouridine(34) in tRNA + phosphate. Involved in the post-transcriptional modification of the uridine at the wobble position (U34) of tRNA(Lys), tRNA(Glu) and tRNA(Gln). Catalyzes the conversion of 2-thiouridine (S2U-RNA) to 2-selenouridine (Se2U-RNA). Acts in a two-step process involving geranylation of 2-thiouridine (S2U) to S-geranyl-2-thiouridine (geS2U) and subsequent selenation of the latter derivative to 2-selenouridine (Se2U) in the tRNA chain. The chain is tRNA 2-selenouridine synthase from Escherichia coli O45:K1 (strain S88 / ExPEC).